Reading from the N-terminus, the 254-residue chain is Photosystem II 22 kDa protein 2, chloroplastic (254 aa).

A chloroplast-targeting transit peptide spans 1–38; it reads MALQQSMAMPMMVVSGLGTAPRSSPMVQLQRMKKHLVV. 2 repeat units span residues 42-148 and 149-253. Helical transmembrane passes span 86 to 106, 120 to 140, 184 to 204, and 219 to 239; these read VAML…KGIL, AEPL…GALG, LFVG…EIIT, and PINE…FAAI.

It belongs to the ELIP/psbS family.

The protein resides in the plastid. It is found in the chloroplast thylakoid membrane. In terms of biological role, involved in high light-mediated energy-dependent nonphotochemical quenching (NPQ, qE) and thermal dissipation (TD) thus regulating energy conversion in photosystem II and protecting from photoinhibition. Also seems to regulate quantum yield of electron transport in fluctuating light conditions. The polypeptide is Photosystem II 22 kDa protein 2, chloroplastic (Oryza sativa subsp. indica (Rice)).